Consider the following 764-residue polypeptide: Putative alpha-1,3-mannosyltransferase MNN13 (764 aa).

Topologically, residues 1–13 are cytoplasmic; the sequence is MIKPILGTKKIRR. The helical transmembrane segment at 14–34 threads the bilayer; sequence VICIIIGLFCILLLIGIFKHN. Residues 35 to 764 lie on the Lumenal side of the membrane; that stretch reads STNSVNNEAS…YLGDVWVGKY (730 aa). Residues N45 and N204 are each glycosylated (N-linked (GlcNAc...) asparagine).

It belongs to the MNN1/MNT family.

It is found in the golgi apparatus membrane. Its pathway is protein modification; protein glycosylation. Functionally, responsible for addition of the terminal mannose residues to the outer chain of core N-linked polysaccharides and to O-linked mannotriose. Implicated in late Golgi modifications. The protein is Putative alpha-1,3-mannosyltransferase MNN13 (MNN13) of Candida albicans (strain SC5314 / ATCC MYA-2876) (Yeast).